Reading from the N-terminus, the 236-residue chain is MTKRYWNIDLEEMMRAGVHFGHGTRKWNPRMAPYISAKRKGIHIINLTRTARFLSEACDLVFDAASRGKQFLIVGTKNKAADLVSRAAIRARCHYVNKKWLGGMLTNWSTTEKRLHKFRDLRTEQKTEGFNRLPKRDAAVLKRQLSRLKTYLGGIKYMTGLPDIVIIIDQQEEYTALRECITLGIPTISLIDTNCNPDLADISIPANDDAIASIRFILNKLVFAIGEGRSSYIQNS.

It belongs to the universal ribosomal protein uS2 family.

It is found in the plastid. Its subcellular location is the chloroplast. The chain is Small ribosomal subunit protein uS2c (rps2) from Lepidium virginicum (Virginia pepperweed).